A 152-amino-acid polypeptide reads, in one-letter code: Deoxyuridine 5'-triphosphate nucleotidohydrolase (152 aa).

Substrate-binding positions include 72–74, Asn-85, and 89–91; these read RSG and TID.

This sequence belongs to the dUTPase family. The cofactor is Mg(2+).

The enzyme catalyses dUTP + H2O = dUMP + diphosphate + H(+). Its pathway is pyrimidine metabolism; dUMP biosynthesis; dUMP from dCTP (dUTP route): step 2/2. Functionally, this enzyme is involved in nucleotide metabolism: it produces dUMP, the immediate precursor of thymidine nucleotides and it decreases the intracellular concentration of dUTP so that uracil cannot be incorporated into DNA. In Rhodopseudomonas palustris (strain ATCC BAA-98 / CGA009), this protein is Deoxyuridine 5'-triphosphate nucleotidohydrolase.